Consider the following 26-residue polypeptide: Somatostatin-1 (26 aa).

Cysteine 15 and cysteine 26 are oxidised to a cystine.

The protein belongs to the somatostatin family.

The protein resides in the secreted. Somatostatin inhibits the release of somatotropin. The polypeptide is Somatostatin-1 (sst1) (Amia calva (Bowfin)).